A 713-amino-acid polypeptide reads, in one-letter code: Peroxisomal biogenesis factor 8 (713 aa).

The tract at residues 1-31 (MYRLGSQGRSIQSQLQNGDSSSGRPLQLQGT) is disordered. Polar residues predominate over residues 7–30 (QGRSIQSQLQNGDSSSGRPLQLQG). A Microbody targeting signal motif is present at residues 711 to 713 (AKL).

As to quaternary structure, interacts with PEX5 (via N-terminus).

Its subcellular location is the peroxisome membrane. In terms of biological role, essential component of the machinery required for the import of both PTS1 and PTS2 (and perhaps all) peroxisomal matrix proteins. Binding of PEX8 to the N-terminus of PEX5 cargo receptor induces a conformational change of the TPR domains and decrease their binding affinity to cargo, facilitating the release of the PTS1 proteins within the peroxisome. The polypeptide is Peroxisomal biogenesis factor 8 (Komagataella phaffii (strain GS115 / ATCC 20864) (Yeast)).